Here is a 130-residue protein sequence, read N- to C-terminus: Small ribosomal subunit protein uS8 (130 aa).

Belongs to the universal ribosomal protein uS8 family. As to quaternary structure, part of the 30S ribosomal subunit. Contacts proteins S5 and S12.

Functionally, one of the primary rRNA binding proteins, it binds directly to 16S rRNA central domain where it helps coordinate assembly of the platform of the 30S subunit. The chain is Small ribosomal subunit protein uS8 from Haemophilus influenzae (strain 86-028NP).